The primary structure comprises 490 residues: N-succinylglutamate 5-semialdehyde dehydrogenase (490 aa).

224 to 229 contacts NAD(+); it reads GSSPTG. Residues glutamate 247 and cysteine 281 contribute to the active site.

The protein belongs to the aldehyde dehydrogenase family. AstD subfamily.

It carries out the reaction N-succinyl-L-glutamate 5-semialdehyde + NAD(+) + H2O = N-succinyl-L-glutamate + NADH + 2 H(+). It participates in amino-acid degradation; L-arginine degradation via AST pathway; L-glutamate and succinate from L-arginine: step 4/5. Functionally, catalyzes the NAD-dependent reduction of succinylglutamate semialdehyde into succinylglutamate. In Hahella chejuensis (strain KCTC 2396), this protein is N-succinylglutamate 5-semialdehyde dehydrogenase.